Here is a 173-residue protein sequence, read N- to C-terminus: CKLF-like MARVEL transmembrane domain-containing protein 8 (173 aa).

An MARVEL domain is found at 36-168 (FLRTLPGLLI…NTYFSFIAWR (133 aa)). Helical transmembrane passes span 40 to 60 (LPGL…TLIA), 70 to 90 (FGWV…FLII), 105 to 125 (TTVG…AAIV), and 147 to 167 (FFAF…FIAW).

This sequence belongs to the chemokine-like factor family.

It localises to the membrane. In Bos taurus (Bovine), this protein is CKLF-like MARVEL transmembrane domain-containing protein 8 (CMTM8).